A 538-amino-acid chain; its full sequence is Bifunctional purine biosynthesis protein PurH (538 aa).

One can recognise an MGS-like domain in the interval 6–158 (KHIPAPDLHR…KNHAYVATVV (153 aa)).

Belongs to the PurH family.

The enzyme catalyses (6R)-10-formyltetrahydrofolate + 5-amino-1-(5-phospho-beta-D-ribosyl)imidazole-4-carboxamide = 5-formamido-1-(5-phospho-D-ribosyl)imidazole-4-carboxamide + (6S)-5,6,7,8-tetrahydrofolate. It catalyses the reaction IMP + H2O = 5-formamido-1-(5-phospho-D-ribosyl)imidazole-4-carboxamide. The protein operates within purine metabolism; IMP biosynthesis via de novo pathway; 5-formamido-1-(5-phospho-D-ribosyl)imidazole-4-carboxamide from 5-amino-1-(5-phospho-D-ribosyl)imidazole-4-carboxamide (10-formyl THF route): step 1/1. Its pathway is purine metabolism; IMP biosynthesis via de novo pathway; IMP from 5-formamido-1-(5-phospho-D-ribosyl)imidazole-4-carboxamide: step 1/1. This is Bifunctional purine biosynthesis protein PurH from Brucella abortus (strain S19).